Reading from the N-terminus, the 172-residue chain is 3-hydroxydecanoyl-[acyl-carrier-protein] dehydratase (172 aa).

The active site involves H71.

It belongs to the thioester dehydratase family. FabA subfamily. In terms of assembly, homodimer.

It localises to the cytoplasm. The catalysed reaction is a (3R)-hydroxyacyl-[ACP] = a (2E)-enoyl-[ACP] + H2O. It catalyses the reaction (3R)-hydroxydecanoyl-[ACP] = (2E)-decenoyl-[ACP] + H2O. It carries out the reaction (2E)-decenoyl-[ACP] = (3Z)-decenoyl-[ACP]. The protein operates within lipid metabolism; fatty acid biosynthesis. Necessary for the introduction of cis unsaturation into fatty acids. Catalyzes the dehydration of (3R)-3-hydroxydecanoyl-ACP to E-(2)-decenoyl-ACP and then its isomerization to Z-(3)-decenoyl-ACP. Can catalyze the dehydratase reaction for beta-hydroxyacyl-ACPs with saturated chain lengths up to 16:0, being most active on intermediate chain length. This chain is 3-hydroxydecanoyl-[acyl-carrier-protein] dehydratase, found in Klebsiella pneumoniae (strain 342).